Consider the following 149-residue polypeptide: Transcriptional repressor NrdR (149 aa).

Residues 3–34 (CPFCSAVDTKVIDSRLVGEGSQVRRRRQCLVC) fold into a zinc finger. Residues 49 to 139 (PRVIKSNEVR…VYRSFEDIRE (91 aa)) form the ATP-cone domain.

Belongs to the NrdR family. Requires Zn(2+) as cofactor.

In terms of biological role, negatively regulates transcription of bacterial ribonucleotide reductase nrd genes and operons by binding to NrdR-boxes. The sequence is that of Transcriptional repressor NrdR from Pectobacterium atrosepticum (strain SCRI 1043 / ATCC BAA-672) (Erwinia carotovora subsp. atroseptica).